The chain runs to 458 residues: Gamma aminobutyrate transaminase 2 (458 aa).

A pyridoxal 5'-phosphate-binding site is contributed by 114-115 (GS). Residue Y147 participates in substrate binding. D254 contributes to the pyridoxal 5'-phosphate binding site. K283 is a binding site for substrate. K283 is subject to N6-(pyridoxal phosphate)lysine.

The protein belongs to the class-III pyridoxal-phosphate-dependent aminotransferase family. As to expression, expressed in leaves, roots, stems, flowers and fruits. Expressed in carpels, but not in stamens.

It localises to the cytoplasm. The enzyme catalyses 4-aminobutanoate + pyruvate = succinate semialdehyde + L-alanine. It catalyses the reaction 4-aminobutanoate + glyoxylate = succinate semialdehyde + glycine. Its function is as follows. Transaminase that degrades gamma-amino butyric acid (GABA) and uses pyruvate or glyoxylate as amino-group acceptor. Cannot use beta-alanine, ornithine, acetylornithine, serine, glycine, asparagine, glutamine, glutamate, valine, leucine, isoleucine, methionine, phenylalanine, histidine, lysine, arginine, aspartate, threonine, tyrosine, tryptophan, proline, or cysteine as amino donors. May be responsible for establishing the GABA gradient in the carpel. This is Gamma aminobutyrate transaminase 2 (GABA-TP2) from Solanum lycopersicum (Tomato).